The following is a 301-amino-acid chain: Amylovoran biosynthesis glycosyltransferase AmsB (301 aa).

The protein belongs to the glycosyltransferase 2 family.

The protein operates within glycan metabolism; exopolysaccharide biosynthesis. Involved in the biosynthesis of amylovoran, which functions as a virulence factor. May function as a glycosyl transferase which transfers galactose from UDP-galactose to a lipid-linked amylovoran-subunit precursor. The protein is Amylovoran biosynthesis glycosyltransferase AmsB (amsB) of Erwinia amylovora (Fire blight bacteria).